We begin with the raw amino-acid sequence, 368 residues long: Phosphate acyltransferase (368 aa).

Residues 338-368 are disordered; sequence GDGGHDAGGAGTASPAPGHHAEPSAAQSSKA.

The protein belongs to the PlsX family. As to quaternary structure, homodimer. Probably interacts with PlsY.

The protein localises to the cytoplasm. It carries out the reaction a fatty acyl-[ACP] + phosphate = an acyl phosphate + holo-[ACP]. It participates in lipid metabolism; phospholipid metabolism. In terms of biological role, catalyzes the reversible formation of acyl-phosphate (acyl-PO(4)) from acyl-[acyl-carrier-protein] (acyl-ACP). This enzyme utilizes acyl-ACP as fatty acyl donor, but not acyl-CoA. This Burkholderia ambifaria (strain MC40-6) protein is Phosphate acyltransferase.